We begin with the raw amino-acid sequence, 140 residues long: Ctenidin-1 (140 aa).

A signal peptide spans 1–19 (MKHLIPLIVMASVVLAVYA). Gly138 carries the post-translational modification Glycine amide.

It belongs to the glycine-rich peptide family. As to expression, expressed in hemocytes (at protein level).

It localises to the secreted. In terms of biological role, antimicrobial protein with bacteriostatic activity against the Gram-negative bacterium E.coli, and very weak activity against the Gram-positive bacterium S.aureus. Lacks activity against the yeast C.albicans. This Cupiennius salei (American wandering spider) protein is Ctenidin-1.